A 261-amino-acid polypeptide reads, in one-letter code: Imidazole glycerol phosphate synthase subunit HisF (261 aa).

Catalysis depends on residues Asp-12 and Asp-131.

It belongs to the HisA/HisF family. As to quaternary structure, heterodimer of HisH and HisF.

The protein localises to the cytoplasm. The enzyme catalyses 5-[(5-phospho-1-deoxy-D-ribulos-1-ylimino)methylamino]-1-(5-phospho-beta-D-ribosyl)imidazole-4-carboxamide + L-glutamine = D-erythro-1-(imidazol-4-yl)glycerol 3-phosphate + 5-amino-1-(5-phospho-beta-D-ribosyl)imidazole-4-carboxamide + L-glutamate + H(+). Its pathway is amino-acid biosynthesis; L-histidine biosynthesis; L-histidine from 5-phospho-alpha-D-ribose 1-diphosphate: step 5/9. Its function is as follows. IGPS catalyzes the conversion of PRFAR and glutamine to IGP, AICAR and glutamate. The HisF subunit catalyzes the cyclization activity that produces IGP and AICAR from PRFAR using the ammonia provided by the HisH subunit. The chain is Imidazole glycerol phosphate synthase subunit HisF from Brucella abortus (strain S19).